Here is a 521-residue protein sequence, read N- to C-terminus: Sphingolipid C9-methyltransferase 2 (521 aa).

2 helical membrane-spanning segments follow: residues 60–80 (VLISILTIVPWWLSWKVGGGF) and 85–105 (FFAIIVDLPMLAAWWLTISAI). Residues 225–226 (YT), 262–270 (MLDIGCGWG), 288–293 (TLGRNQ), and 318–319 (YR) contribute to the S-adenosyl-L-methionine site.

Belongs to the CFA/CMAS family.

Its subcellular location is the membrane. It catalyses the reaction a (4E,8E)-4-sphinga-4,8-dienine ceramide + S-adenosyl-L-methionine = a 9-methyl-(4E,8E)-sphinga-4,8-dienine ceramide + S-adenosyl-L-homocysteine + H(+). The protein operates within lipid metabolism; sphingolipid metabolism. Its function is as follows. Catalyzes methylation of the sphingoid base component of glucosylceramides (GluCers) at the C9-position. Sphingolipid C9-methylation requires 4,8-desaturated ceramides as substrates. Glucosylceramides play important roles in growth, differentiation and pathogenicity. The methyl group at the C9-position distinguishes fungal glucosylceramides from those of plants and animals and may thus play a role in host-pathogen interactions enabling the host to recognize the fungal attack and initiate specific defense responses. However, C-9 methylation of GlcCers is not essential for the sensitivity of F.graminearum to plant defensins MsDef1 and RsAFP2. The polypeptide is Sphingolipid C9-methyltransferase 2 (Gibberella zeae (strain ATCC MYA-4620 / CBS 123657 / FGSC 9075 / NRRL 31084 / PH-1) (Wheat head blight fungus)).